Here is a 497-residue protein sequence, read N- to C-terminus: tRNA-2-methylthio-N(6)-dimethylallyladenosine synthase (497 aa).

One can recognise an MTTase N-terminal domain in the interval 44-161 (KKVFVTTQGC…LPELYDQSHQ (118 aa)). The [4Fe-4S] cluster site is built by cysteine 53, cysteine 90, cysteine 124, cysteine 205, cysteine 209, and cysteine 212. Positions 191-423 (RVEGFKAFVS…QKVIIDSTLA (233 aa)) constitute a Radical SAM core domain. One can recognise a TRAM domain in the interval 426 to 494 (HEMVGTTTRV…PHMVKGEIEA (69 aa)).

The protein belongs to the methylthiotransferase family. MiaB subfamily. In terms of assembly, monomer. Requires [4Fe-4S] cluster as cofactor.

Its subcellular location is the cytoplasm. The catalysed reaction is N(6)-dimethylallyladenosine(37) in tRNA + (sulfur carrier)-SH + AH2 + 2 S-adenosyl-L-methionine = 2-methylsulfanyl-N(6)-dimethylallyladenosine(37) in tRNA + (sulfur carrier)-H + 5'-deoxyadenosine + L-methionine + A + S-adenosyl-L-homocysteine + 2 H(+). Catalyzes the methylthiolation of N6-(dimethylallyl)adenosine (i(6)A), leading to the formation of 2-methylthio-N6-(dimethylallyl)adenosine (ms(2)i(6)A) at position 37 in tRNAs that read codons beginning with uridine. This Psychrobacter cryohalolentis (strain ATCC BAA-1226 / DSM 17306 / VKM B-2378 / K5) protein is tRNA-2-methylthio-N(6)-dimethylallyladenosine synthase.